The chain runs to 465 residues: MSSLFRHIPSVDRFLQDLEQDRALADLPRQMLKDLVAEFLDLCREEIRAGVVTDESALAFTTLAARAGAYVRTRSRPHFRRVVNATGVVIHTNLGRSILAEEAVLAVAEGCRHYSNLEMDLDTGQRGSRYSHVEKLLCRLTGAEAGLVVNNNAAAVLLVLDTLAKGREVVVSRGQLVEIGGSFRIPEVMKKSGAVLREVGATNRTHLRDYAEAIGPDTAMLMKVHTSNYRIIGFHKEVDLPDLVALGRERGLSTFEDLGSGNLFDFSPYGFMPEPTVQQVLRSGVDVVTFSGDKLLGGPQAGVIVGRREFIERIKKNQLNRALRIDKMTLAALEATLRLYLDPEQARRTVPTLAMITAAPKELHARAGRLRRRLSRDLAGLASVAVKPGFSRVGGGSFPEQDLSTTLVSVAPTGMDVDSLRQGLLAEDIPVVGRVEDGAFCLDPRTLMDAEFALVAGAMKAVLAR.

Residue Lys294 is modified to N6-(pyridoxal phosphate)lysine.

This sequence belongs to the SelA family. Requires pyridoxal 5'-phosphate as cofactor.

The protein resides in the cytoplasm. The catalysed reaction is L-seryl-tRNA(Sec) + selenophosphate + H(+) = L-selenocysteinyl-tRNA(Sec) + phosphate. The protein operates within aminoacyl-tRNA biosynthesis; selenocysteinyl-tRNA(Sec) biosynthesis; selenocysteinyl-tRNA(Sec) from L-seryl-tRNA(Sec) (bacterial route): step 1/1. Converts seryl-tRNA(Sec) to selenocysteinyl-tRNA(Sec) required for selenoprotein biosynthesis. The polypeptide is L-seryl-tRNA(Sec) selenium transferase (selA) (Desulfomicrobium baculatum (Desulfovibrio baculatus)).